We begin with the raw amino-acid sequence, 281 residues long: HTH-type transcriptional activator RamA (281 aa).

The region spanning 213-278 (RIKQTTKLSA…EAVNAARRIG (66 aa)) is the HTH luxR-type domain.

In terms of biological role, ramA is a master regulator of acetate metabolism. It positively controls the expression of acnA, aceA, aceB, ack, pta and ramB genes in the presence of acetate. RamA is also a positive regulator of rpf2 gene expression during growth on glucose as the sole carbon source. In Corynebacterium glutamicum (strain ATCC 13032 / DSM 20300 / JCM 1318 / BCRC 11384 / CCUG 27702 / LMG 3730 / NBRC 12168 / NCIMB 10025 / NRRL B-2784 / 534), this protein is HTH-type transcriptional activator RamA.